We begin with the raw amino-acid sequence, 596 residues long: Phosphoenolpyruvate carboxykinase [GTP] (596 aa).

Substrate contacts are provided by residues Arg77 and 205-207; that span reads YGG. Mn(2+) contacts are provided by Lys214 and His234. Ser256 provides a ligand contact to substrate. Residue 257–262 participates in GTP binding; it reads ACGKTN. Cys258 is an active-site residue. Asp283 provides a ligand contact to Mn(2+). Residues 362–388 are disordered; that stretch reads KKGSTEKAAHPNSRFTAPAKNNPAISP. 373-375 lines the substrate pocket; the sequence is NSR. Residues Arg375, Arg406, and 499-502 contribute to the GTP site; that span reads YGDN.

This sequence belongs to the phosphoenolpyruvate carboxykinase [GTP] family. Monomer. The cofactor is Mn(2+).

Its subcellular location is the cytoplasm. The enzyme catalyses oxaloacetate + GTP = phosphoenolpyruvate + GDP + CO2. It functions in the pathway carbohydrate biosynthesis; gluconeogenesis. Its function is as follows. Catalyzes the conversion of oxaloacetate (OAA) to phosphoenolpyruvate (PEP), the rate-limiting step in the metabolic pathway that produces glucose from lactate and other precursors derived from the citric acid cycle. The sequence is that of Phosphoenolpyruvate carboxykinase [GTP] from Anaeromyxobacter sp. (strain K).